Consider the following 155-residue polypeptide: uncharacterized protein (155 aa).

This sequence belongs to the IIV-6 145L family.

This is an uncharacterized protein from Acheta domesticus (House cricket).